The sequence spans 653 residues: Transcription factor Ken 1 (653 aa).

The region spanning 35-103 is the BTB domain; the sequence is TDLLLICDGK…LYSGQVYVRS (69 aa). Disordered regions lie at residues 126–215, 234–305, 429–451, and 512–534; these read NSDG…DRDR, NNHP…SDDA, LSNN…PPSA, and ELSA…GSGS. Residues 145-157 are compositionally biased toward polar residues; the sequence is NRNTEGITGSSVV. Positions 251–272 are enriched in basic residues; that stretch reads GHHHHHHHHHHHRQLHQIKTRS. Residues 286-299 are compositionally biased toward polar residues; it reads SDPVNLSIVKQQQD. Over residues 430–444 the composition is skewed to low complexity; it reads SNNNNSSSNNNNNNN. Gly residues predominate over residues 520–534; the sequence is AGGGGGGSGGNGSGS. C2H2-type zinc fingers lie at residues 555-577, 583-606, and 619-641; these read YRCE…LRVH, FACR…CSVH, and YTCC…LSGH.

Its subcellular location is the nucleus. Transcription factor required for terminalia development. Negative regulator of the JAK/STAT pathway: represses JAK/STAT-dependent expression of ventral veins lacking (vvl) in the posterior spiracles. The sequence is that of Transcription factor Ken 1 from Culex quinquefasciatus (Southern house mosquito).